Here is a 1189-residue protein sequence, read N- to C-terminus: Phosphinothricin tripeptide synthetase PhsB (1189 aa).

In terms of domain architecture, Carrier 1 spans 5–80; sequence QTDDVVTGRI…ALAKRIRASR (76 aa). Position 40 is an O-(pantetheine 4'-phosphoryl)serine (S40). Disordered regions lie at residues 75-97 and 454-476; these read RIRA…PVDS and TPDR…GGDT. The segment at 100–541 is condensation; the sequence is TAPLTFQQEP…VALLPLQEPA (442 aa). Residues 455–472 are compositionally biased toward basic and acidic residues; that stretch reads PDRDGREPGEGPFAREES. The interval 572–969 is adenylation; sequence AQAHRTPDAV…GREDGQVKLR (398 aa). The segment at 1045–1081 is disordered; that stretch reads DRVPLTPSGKTDRKALPDPAAGEQPRSGRGAAPGTPA. Positions 1076–1151 constitute a Carrier 2 domain; it reads APGTPAEREL…DFALAVVTAQ (76 aa). Residue S1111 is modified to O-(pantetheine 4'-phosphoryl)serine.

This sequence belongs to the NRP synthetase family. Pantetheine 4'-phosphate is required as a cofactor.

The catalysed reaction is holo-[peptidyl-carrier protein] + L-alanine + ATP = L-alanyl-[peptidyl-carrier protein] + AMP + diphosphate. Its pathway is secondary metabolite biosynthesis; bialaphos biosynthesis. Functionally, involved in the biosynthesis of phosphinothricin tripeptide (PTT), also known as bialaphos (BA), a natural-product antibiotic and potent herbicide. Adenylates L-alanine and loads it onto a peptidyl carrier domain via a thioester linkage to the phosphopanthetheine moiety. Shows weaker activity with aminobutyric acid and L-serine. In Streptomyces viridochromogenes (strain DSM 40736 / JCM 4977 / BCRC 1201 / Tue 494), this protein is Phosphinothricin tripeptide synthetase PhsB.